The chain runs to 339 residues: Glycerol-3-phosphate dehydrogenase [NAD(P)+] (339 aa).

Residues S13, W14, and K108 each contribute to the NADPH site. Sn-glycerol 3-phosphate-binding residues include K108, G139, and S141. A143 provides a ligand contact to NADPH. Sn-glycerol 3-phosphate contacts are provided by K194, D247, S257, R258, and N259. The active-site Proton acceptor is the K194. R258 is a binding site for NADPH. 2 residues coordinate NADPH: V282 and E284.

It belongs to the NAD-dependent glycerol-3-phosphate dehydrogenase family.

The protein localises to the cytoplasm. It carries out the reaction sn-glycerol 3-phosphate + NAD(+) = dihydroxyacetone phosphate + NADH + H(+). It catalyses the reaction sn-glycerol 3-phosphate + NADP(+) = dihydroxyacetone phosphate + NADPH + H(+). It functions in the pathway membrane lipid metabolism; glycerophospholipid metabolism. Functionally, catalyzes the reduction of the glycolytic intermediate dihydroxyacetone phosphate (DHAP) to sn-glycerol 3-phosphate (G3P), the key precursor for phospholipid synthesis. This Streptococcus equi subsp. zooepidemicus (strain H70) protein is Glycerol-3-phosphate dehydrogenase [NAD(P)+].